The primary structure comprises 206 residues: 2,3-bisphosphoglycerate-dependent phosphoglycerate mutase (206 aa).

Residues 9–16, 22–23, Arg-61, 88–91, Lys-99, 115–116, and 159–160 contribute to the substrate site; these read RHGQSEWN, TG, ERNY, RR, and GN. Catalysis depends on His-10, which acts as the Tele-phosphohistidine intermediate. Glu-88 serves as the catalytic Proton donor/acceptor.

This sequence belongs to the phosphoglycerate mutase family. BPG-dependent PGAM subfamily. In terms of assembly, homodimer.

The catalysed reaction is (2R)-2-phosphoglycerate = (2R)-3-phosphoglycerate. The protein operates within carbohydrate degradation; glycolysis; pyruvate from D-glyceraldehyde 3-phosphate: step 3/5. Catalyzes the interconversion of 2-phosphoglycerate and 3-phosphoglycerate. The sequence is that of 2,3-bisphosphoglycerate-dependent phosphoglycerate mutase from Bartonella henselae (strain ATCC 49882 / DSM 28221 / CCUG 30454 / Houston 1) (Rochalimaea henselae).